The chain runs to 678 residues: MRRCPCRGSLSEAEAGALPAEARMGLEALRGGRRRQPGLQRPGPGAGGPTGRPEGGGPRAWIEESSLHSEAERTDLEPAPCPNGPQAESCGDGHAECEAAGLVVASEKPRQNKELDGSNLQTHPRRNSPLVEMEMAGSWTDGFRTDLHRSDLQSRPKRASLCTQPGFDESWTELDRSDMWQTLPERDNKPRVDNLRTHHGVSKLQTHPVCLSPESSADNSGKELSADASRTPHDTDGFWIESQTDDSLKGPSTQTACRQPGSDGFSSKDTESALTQPGTDGLRDDSVLGESNGNDPLDLSEPGELVTNLCSHLECSSLCPVPRLIITPETPEPEAQPVGPQSRIEGGTGGFSSASSFDESEDDLVAGGGGTSDPEDRAGSKPWKKLKTVLKYSPFVVSFHKHYYPWVQLSGHAGNFQAGEDGRILKRFCQCEQRSLELLMGDPLRPFVPAYYGMVQRDGQAFNQMEDLLADFEGPSIMDCKMGSRTYLEEELVKARERPKPRKDMYEKMVAVDPGAPTPEEHAQGAITKPRYMQWRETLSSTSTLGFRIEGIKKADGTCNTNFKKTQALEQVTKVLEDFVNGDLGILRKYVARLEDLRETLENSPFFKTHEVVGSSLLFVHDHTGLAKVWMIDFGKTVALPDHQMLSHRLPWTEGNREDGYLWGLDNLICLLQGLAQS.

2 disordered regions span residues 26–128 (LEAL…RRNS) and 151–300 (DLQS…LDLS). Over residues 44–58 (PGAGGPTGRPEGGGP) the composition is skewed to gly residues. 2 stretches are compositionally biased toward basic and acidic residues: residues 61–76 (WIEE…RTDL) and 107–116 (EKPRQNKELD). The residue at position 160 (serine 160) is a Phosphoserine. 2 stretches are compositionally biased toward basic and acidic residues: residues 173-196 (ELDR…DNLR) and 220-236 (SGKE…HDTD). The Nuclear export signal signature appears at 318-326 (LCPVPRLII). Residues 328–380 (PETPEPEAQPVGPQSRIEGGTGGFSSASSFDESEDDLVAGGGGTSDPEDRAGS) form a disordered region. Phosphothreonine is present on threonine 330. Phosphoserine is present on serine 398. ATP is bound by residues lysine 426, 466–468 (EDL), and aspartate 479. Substrate contacts are provided by residues lysine 481, 502–508 (RKDMYEK), and 529–536 (KPRYMQWR). The segment at 504-512 (DMYEKMVAV) is calmodulin-binding. Residues lysine 553 and aspartate 633 each contribute to the ATP site. Residue lysine 636 coordinates substrate.

The protein belongs to the inositol phosphokinase (IPK) family.

Its subcellular location is the nucleus. The protein localises to the cytoplasm. The catalysed reaction is 1D-myo-inositol 1,4,5-trisphosphate + ATP = 1D-myo-inositol 1,3,4,5-tetrakisphosphate + ADP + H(+). Activated by calcium/calmodulin. Inhibited by high concentrations of the substrate Ins(1,2,4)P3, and allosterically activated by the product Ins(1,3,4,5)P4. Catalyzes the phosphorylation of 1D-myo-inositol 1,4,5-trisphosphate (InsP3) into 1D-myo-inositol 1,3,4,5-tetrakisphosphate and participates to the regulation of calcium homeostasis. Can phosphorylate inositol 2,4,5-triphosphate to inositol 2,4,5,6-tetraphosphate. This is Inositol-trisphosphate 3-kinase C (Itpkc) from Mus musculus (Mouse).